Here is a 214-residue protein sequence, read N- to C-terminus: Glycerol-3-phosphate acyltransferase (214 aa).

The next 5 membrane-spanning stretches (helical) occupy residues 4–24, 52–72, 82–102, 118–138, and 159–179; these read LIVAVVAYLIGSVSFAVIVSA, AAILTLIGDAFKGWLPVWFVV, DTSVAIAAVAVFLGHLYPAFF, LAINPILGVATLLTWLIVAFF, and FLFGPHIIALAIVVMSSLLVW.

The protein belongs to the PlsY family. Probably interacts with PlsX.

The protein resides in the cell inner membrane. The catalysed reaction is an acyl phosphate + sn-glycerol 3-phosphate = a 1-acyl-sn-glycero-3-phosphate + phosphate. The protein operates within lipid metabolism; phospholipid metabolism. Its function is as follows. Catalyzes the transfer of an acyl group from acyl-phosphate (acyl-PO(4)) to glycerol-3-phosphate (G3P) to form lysophosphatidic acid (LPA). This enzyme utilizes acyl-phosphate as fatty acyl donor, but not acyl-CoA or acyl-ACP. The protein is Glycerol-3-phosphate acyltransferase of Paraburkholderia xenovorans (strain LB400).